The chain runs to 451 residues: NADH-quinone oxidoreductase subunit D (451 aa).

The protein belongs to the complex I 49 kDa subunit family. In terms of assembly, NDH-1 is composed of 14 different subunits. Subunits NuoB, C, D, E, F, and G constitute the peripheral sector of the complex.

It is found in the cell membrane. The catalysed reaction is a quinone + NADH + 5 H(+)(in) = a quinol + NAD(+) + 4 H(+)(out). Its function is as follows. NDH-1 shuttles electrons from NADH, via FMN and iron-sulfur (Fe-S) centers, to quinones in the respiratory chain. The immediate electron acceptor for the enzyme in this species is believed to be a menaquinone. Couples the redox reaction to proton translocation (for every two electrons transferred, four hydrogen ions are translocated across the cytoplasmic membrane), and thus conserves the redox energy in a proton gradient. The protein is NADH-quinone oxidoreductase subunit D of Mycolicibacterium gilvum (strain PYR-GCK) (Mycobacterium gilvum (strain PYR-GCK)).